The primary structure comprises 285 residues: Bifunctional protein FolD (285 aa).

NADP(+) is bound by residues 166–168 (GAS), Ser191, and Ile232.

This sequence belongs to the tetrahydrofolate dehydrogenase/cyclohydrolase family. As to quaternary structure, homodimer.

The catalysed reaction is (6R)-5,10-methylene-5,6,7,8-tetrahydrofolate + NADP(+) = (6R)-5,10-methenyltetrahydrofolate + NADPH. It catalyses the reaction (6R)-5,10-methenyltetrahydrofolate + H2O = (6R)-10-formyltetrahydrofolate + H(+). The protein operates within one-carbon metabolism; tetrahydrofolate interconversion. Catalyzes the oxidation of 5,10-methylenetetrahydrofolate to 5,10-methenyltetrahydrofolate and then the hydrolysis of 5,10-methenyltetrahydrofolate to 10-formyltetrahydrofolate. The sequence is that of Bifunctional protein FolD from Actinobacillus pleuropneumoniae serotype 7 (strain AP76).